The primary structure comprises 143 residues: Transcription antitermination protein NusB (143 aa).

This sequence belongs to the NusB family.

In terms of biological role, involved in transcription antitermination. Required for transcription of ribosomal RNA (rRNA) genes. Binds specifically to the boxA antiterminator sequence of the ribosomal RNA (rrn) operons. The protein is Transcription antitermination protein NusB of Dehalococcoides mccartyi (strain ATCC BAA-2266 / KCTC 15142 / 195) (Dehalococcoides ethenogenes (strain 195)).